The chain runs to 185 residues: MVDKKVDKKPVPEDWPHIVGDYVVGDAESPVAVVTLGSHMEDEPVRAGAAISGPLHTENLGIEKVVGNVIANPNLRFLLVCGAEVMGHITGQTMKALHSNGVDGETGRIIGATGAIPYIENMPDEAIERFRRQVELVDMVDVEDPAAIRERIGECVVHDSGAIDEEPLILRPSEDLNKNKPDENT.

Topologically, residues 1-21 are cytoplasmic; that stretch reads MVDKKVDKKPVPEDWPHIVGD. The chain crosses the membrane as a helical span at residues 22–38; the sequence is YVVGDAESPVAVVTLGS. The Extracellular segment spans residues 39 to 185; sequence HMEDEPVRAG…LNKNKPDENT (147 aa). H88 contributes to the 5-hydroxybenzimidazolylcob(I)amide binding site.

It belongs to the MtrA family. The complex is composed of 8 subunits; MtrA, MtrB, MtrC, MtrD, MtrE, MtrF, MtrG and MtrH. 5-hydroxybenzimidazolylcob(I)amide serves as cofactor.

It is found in the cell membrane. The catalysed reaction is 5-methyl-5,6,7,8-tetrahydromethanopterin + coenzyme M + 2 Na(+)(in) = 5,6,7,8-tetrahydromethanopterin + methyl-coenzyme M + 2 Na(+)(out). It functions in the pathway one-carbon metabolism; methanogenesis from CO(2); methyl-coenzyme M from 5,10-methylene-5,6,7,8-tetrahydromethanopterin: step 2/2. In terms of biological role, part of a complex that catalyzes the formation of methyl-coenzyme M and tetrahydromethanopterin from coenzyme M and methyl-tetrahydromethanopterin. This is an energy-conserving, sodium-ion translocating step. The protein is Tetrahydromethanopterin S-methyltransferase subunit A 2 of Methanothermobacter marburgensis (strain ATCC BAA-927 / DSM 2133 / JCM 14651 / NBRC 100331 / OCM 82 / Marburg) (Methanobacterium thermoautotrophicum).